A 148-amino-acid chain; its full sequence is uncharacterized protein (148 aa).

This is an uncharacterized protein from Archaeoglobus fulgidus (strain ATCC 49558 / DSM 4304 / JCM 9628 / NBRC 100126 / VC-16).